The sequence spans 335 residues: Ketol-acid reductoisomerase (NADP(+)) (335 aa).

One can recognise a KARI N-terminal Rossmann domain in the interval S5–T185. NADP(+)-binding positions include Y28 to Q31, S56, and D86 to Q89. H111 is an active-site residue. G137 contacts NADP(+). The 146-residue stretch at T186–G331 folds into the KARI C-terminal knotted domain. Positions 194, 198, 230, and 234 each coordinate Mg(2+). Residue S255 participates in substrate binding.

This sequence belongs to the ketol-acid reductoisomerase family. Mg(2+) is required as a cofactor.

It catalyses the reaction (2R)-2,3-dihydroxy-3-methylbutanoate + NADP(+) = (2S)-2-acetolactate + NADPH + H(+). It carries out the reaction (2R,3R)-2,3-dihydroxy-3-methylpentanoate + NADP(+) = (S)-2-ethyl-2-hydroxy-3-oxobutanoate + NADPH + H(+). The protein operates within amino-acid biosynthesis; L-isoleucine biosynthesis; L-isoleucine from 2-oxobutanoate: step 2/4. It functions in the pathway amino-acid biosynthesis; L-valine biosynthesis; L-valine from pyruvate: step 2/4. In terms of biological role, involved in the biosynthesis of branched-chain amino acids (BCAA). Catalyzes an alkyl-migration followed by a ketol-acid reduction of (S)-2-acetolactate (S2AL) to yield (R)-2,3-dihydroxy-isovalerate. In the isomerase reaction, S2AL is rearranged via a Mg-dependent methyl migration to produce 3-hydroxy-3-methyl-2-ketobutyrate (HMKB). In the reductase reaction, this 2-ketoacid undergoes a metal-dependent reduction by NADPH to yield (R)-2,3-dihydroxy-isovalerate. In Saccharolobus solfataricus (strain ATCC 35092 / DSM 1617 / JCM 11322 / P2) (Sulfolobus solfataricus), this protein is Ketol-acid reductoisomerase (NADP(+)).